Consider the following 130-residue polypeptide: PAGPFRLPRCRKEFQQAQHLRACQQWLHKQARQSGSGPSPQGPQQRPPLLQQCCNELHQEEPLCVCPTLKGAAKAVKQQIQQQGQQHGQQGQQLQHEIRRIYQTATHLPKVCNIPQVQVCPFNKTMPGPS.

Residues 27 to 49 (LHKQARQSGSGPSPQGPQQRPPL) form a disordered region. The segment covering 32-49 (RQSGSGPSPQGPQQRPPL) has biased composition (low complexity).

It belongs to the 2S seed storage albumins family. In terms of assembly, the protein consists of two chains linked by disulfide bonds.

Functionally, inhibits trypsin with a Ki of 7 x 10(-6) M. This Mutarda arvensis (Charlock mustard) protein is Trypsin inhibitor.